The chain runs to 78 residues: MKKQDLIDMEGVVTESLPNAMFRVCLDNGCQVLTHISGRIRRNYIRILPGDRVRVESSPYDLTKGRITYRLRAKSSTD.

Residues 1–72 (MKKQDLIDME…TKGRITYRLR (72 aa)) form the S1-like domain.

The protein belongs to the IF-1 family. Component of the 30S ribosomal translation pre-initiation complex which assembles on the 30S ribosome in the order IF-2 and IF-3, IF-1 and N-formylmethionyl-tRNA(fMet); mRNA recruitment can occur at any time during PIC assembly.

It localises to the plastid. In terms of biological role, one of the essential components for the initiation of protein synthesis. Stabilizes the binding of IF-2 and IF-3 on the 30S subunit to which N-formylmethionyl-tRNA(fMet) subsequently binds. Helps modulate mRNA selection, yielding the 30S pre-initiation complex (PIC). Upon addition of the 50S ribosomal subunit IF-1, IF-2 and IF-3 are released leaving the mature 70S translation initiation complex. This chain is Translation initiation factor IF-1, plastid, found in Aneura mirabilis (Parasitic liverwort).